The following is a 181-amino-acid chain: GATA zinc finger domain-containing protein 22 (181 aa).

Residues 118-145 form a GATA-type zinc finger; the sequence is CQICLTNNTPYWRWSVIENNKIRVCNRC.

This is GATA zinc finger domain-containing protein 22 (gtaV) from Dictyostelium discoideum (Social amoeba).